The sequence spans 147 residues: SsrA-binding protein (147 aa).

This sequence belongs to the SmpB family.

It localises to the cytoplasm. In terms of biological role, required for rescue of stalled ribosomes mediated by trans-translation. Binds to transfer-messenger RNA (tmRNA), required for stable association of tmRNA with ribosomes. tmRNA and SmpB together mimic tRNA shape, replacing the anticodon stem-loop with SmpB. tmRNA is encoded by the ssrA gene; the 2 termini fold to resemble tRNA(Ala) and it encodes a 'tag peptide', a short internal open reading frame. During trans-translation Ala-aminoacylated tmRNA acts like a tRNA, entering the A-site of stalled ribosomes, displacing the stalled mRNA. The ribosome then switches to translate the ORF on the tmRNA; the nascent peptide is terminated with the 'tag peptide' encoded by the tmRNA and targeted for degradation. The ribosome is freed to recommence translation, which seems to be the essential function of trans-translation. The protein is SsrA-binding protein of Mycoplasma pneumoniae (strain ATCC 29342 / M129 / Subtype 1) (Mycoplasmoides pneumoniae).